The chain runs to 255 residues: 3-dehydroquinate dehydratase (255 aa).

3-dehydroquinate is bound by residues 46–48 (EWR) and R82. Residue H143 is the Proton donor/acceptor of the active site. K170 functions as the Schiff-base intermediate with substrate in the catalytic mechanism. 3-dehydroquinate-binding residues include R213, S232, and Q236.

This sequence belongs to the type-I 3-dehydroquinase family. Homodimer.

The catalysed reaction is 3-dehydroquinate = 3-dehydroshikimate + H2O. Its pathway is metabolic intermediate biosynthesis; chorismate biosynthesis; chorismate from D-erythrose 4-phosphate and phosphoenolpyruvate: step 3/7. In terms of biological role, involved in the third step of the chorismate pathway, which leads to the biosynthesis of aromatic amino acids. Catalyzes the cis-dehydration of 3-dehydroquinate (DHQ) and introduces the first double bond of the aromatic ring to yield 3-dehydroshikimate. In Bacillus subtilis (strain 168), this protein is 3-dehydroquinate dehydratase.